The chain runs to 335 residues: Holliday junction branch migration complex subunit RuvB (335 aa).

The large ATPase domain (RuvB-L) stretch occupies residues 1-181 (MDRIVEIEKY…FGMQFRLEFY (181 aa)). Position 20 (leucine 20) interacts with ATP. ADP is bound by residues arginine 21, tyrosine 28, isoleucine 29, glycine 62, leucine 63, glycine 64, lysine 65, threonine 66, and threonine 67. ATP-binding positions include 128 to 130 (EDY) and arginine 171. ADP is bound by residues tyrosine 181 and arginine 218. The interval 182 to 252 (KDSELALILQ…RANEALNSLG (71 aa)) is small ATPAse domain (RuvB-S). The tract at residues 255–335 (ELGFDAMDLR…LNYEKTLFEE (81 aa)) is head domain (RuvB-H). 2 residues coordinate DNA: arginine 309 and arginine 314.

It belongs to the RuvB family. Homohexamer. Forms an RuvA(8)-RuvB(12)-Holliday junction (HJ) complex. HJ DNA is sandwiched between 2 RuvA tetramers; dsDNA enters through RuvA and exits via RuvB. An RuvB hexamer assembles on each DNA strand where it exits the tetramer. Each RuvB hexamer is contacted by two RuvA subunits (via domain III) on 2 adjacent RuvB subunits; this complex drives branch migration. In the full resolvosome a probable DNA-RuvA(4)-RuvB(12)-RuvC(2) complex forms which resolves the HJ.

Its subcellular location is the cytoplasm. It catalyses the reaction ATP + H2O = ADP + phosphate + H(+). The RuvA-RuvB-RuvC complex processes Holliday junction (HJ) DNA during genetic recombination and DNA repair, while the RuvA-RuvB complex plays an important role in the rescue of blocked DNA replication forks via replication fork reversal (RFR). RuvA specifically binds to HJ cruciform DNA, conferring on it an open structure. The RuvB hexamer acts as an ATP-dependent pump, pulling dsDNA into and through the RuvAB complex. RuvB forms 2 homohexamers on either side of HJ DNA bound by 1 or 2 RuvA tetramers; 4 subunits per hexamer contact DNA at a time. Coordinated motions by a converter formed by DNA-disengaged RuvB subunits stimulates ATP hydrolysis and nucleotide exchange. Immobilization of the converter enables RuvB to convert the ATP-contained energy into a lever motion, pulling 2 nucleotides of DNA out of the RuvA tetramer per ATP hydrolyzed, thus driving DNA branch migration. The RuvB motors rotate together with the DNA substrate, which together with the progressing nucleotide cycle form the mechanistic basis for DNA recombination by continuous HJ branch migration. Branch migration allows RuvC to scan DNA until it finds its consensus sequence, where it cleaves and resolves cruciform DNA. This is Holliday junction branch migration complex subunit RuvB from Campylobacter jejuni subsp. jejuni serotype O:2 (strain ATCC 700819 / NCTC 11168).